The primary structure comprises 383 residues: Probable tRNA sulfurtransferase (383 aa).

Positions 58–158 constitute a THUMP domain; the sequence is NEIIHILKMI…ENKSYVWFDK (101 aa). ATP is bound by residues 176 to 177, 201 to 202, arginine 259, glycine 281, and glutamine 290; these read LL and TF.

Belongs to the ThiI family.

The protein resides in the cytoplasm. It catalyses the reaction [ThiI sulfur-carrier protein]-S-sulfanyl-L-cysteine + a uridine in tRNA + 2 reduced [2Fe-2S]-[ferredoxin] + ATP + H(+) = [ThiI sulfur-carrier protein]-L-cysteine + a 4-thiouridine in tRNA + 2 oxidized [2Fe-2S]-[ferredoxin] + AMP + diphosphate. The catalysed reaction is [ThiS sulfur-carrier protein]-C-terminal Gly-Gly-AMP + S-sulfanyl-L-cysteinyl-[cysteine desulfurase] + AH2 = [ThiS sulfur-carrier protein]-C-terminal-Gly-aminoethanethioate + L-cysteinyl-[cysteine desulfurase] + A + AMP + 2 H(+). It functions in the pathway cofactor biosynthesis; thiamine diphosphate biosynthesis. Catalyzes the ATP-dependent transfer of a sulfur to tRNA to produce 4-thiouridine in position 8 of tRNAs, which functions as a near-UV photosensor. Also catalyzes the transfer of sulfur to the sulfur carrier protein ThiS, forming ThiS-thiocarboxylate. This is a step in the synthesis of thiazole, in the thiamine biosynthesis pathway. The sulfur is donated as persulfide by IscS. This Malacoplasma penetrans (strain HF-2) (Mycoplasma penetrans) protein is Probable tRNA sulfurtransferase.